The chain runs to 100 residues: Small ribosomal subunit protein uS14c (100 aa).

Belongs to the universal ribosomal protein uS14 family. In terms of assembly, part of the 30S ribosomal subunit.

The protein resides in the plastid. It is found in the chloroplast. In terms of biological role, binds 16S rRNA, required for the assembly of 30S particles. The sequence is that of Small ribosomal subunit protein uS14c from Chlorokybus atmophyticus (Soil alga).